The sequence spans 388 residues: Alanine racemase 2 (388 aa).

The Proton acceptor; specific for D-alanine role is filled by K39. N6-(pyridoxal phosphate)lysine is present on K39. R137 lines the substrate pocket. Y267 acts as the Proton acceptor; specific for L-alanine in catalysis. M315 is a substrate binding site.

It belongs to the alanine racemase family. Pyridoxal 5'-phosphate serves as cofactor.

It carries out the reaction L-alanine = D-alanine. It functions in the pathway amino-acid biosynthesis; D-alanine biosynthesis; D-alanine from L-alanine: step 1/1. Catalyzes the interconversion of L-alanine and D-alanine. May also act on other amino acids. The chain is Alanine racemase 2 (alr2) from Caldanaerobacter subterraneus subsp. tengcongensis (strain DSM 15242 / JCM 11007 / NBRC 100824 / MB4) (Thermoanaerobacter tengcongensis).